The chain runs to 406 residues: tRNA-specific 2-thiouridylase MnmA (406 aa).

Residues 42–49 and L68 each bind ATP; that span reads GLSGGVDS. C129 acts as the Nucleophile in catalysis. Residues C129 and C239 are joined by a disulfide bond. Residue G154 coordinates ATP. Residues 189–191 form an interaction with tRNA region; it reads KDQ. The active-site Cysteine persulfide intermediate is C239. The segment at 344-345 is interaction with tRNA; it reads RY.

Belongs to the MnmA/TRMU family.

It localises to the cytoplasm. The catalysed reaction is S-sulfanyl-L-cysteinyl-[protein] + uridine(34) in tRNA + AH2 + ATP = 2-thiouridine(34) in tRNA + L-cysteinyl-[protein] + A + AMP + diphosphate + H(+). Its function is as follows. Catalyzes the 2-thiolation of uridine at the wobble position (U34) of tRNA, leading to the formation of s(2)U34. In Prochlorococcus marinus (strain SARG / CCMP1375 / SS120), this protein is tRNA-specific 2-thiouridylase MnmA.